The sequence spans 405 residues: Tryptophan synthase beta chain (405 aa).

Lys-98 bears the N6-(pyridoxal phosphate)lysine mark.

The protein belongs to the TrpB family. In terms of assembly, tetramer of two alpha and two beta chains. It depends on pyridoxal 5'-phosphate as a cofactor.

It catalyses the reaction (1S,2R)-1-C-(indol-3-yl)glycerol 3-phosphate + L-serine = D-glyceraldehyde 3-phosphate + L-tryptophan + H2O. It participates in amino-acid biosynthesis; L-tryptophan biosynthesis; L-tryptophan from chorismate: step 5/5. Its function is as follows. The beta subunit is responsible for the synthesis of L-tryptophan from indole and L-serine. This is Tryptophan synthase beta chain (trpB) from Xylella fastidiosa (strain 9a5c).